Reading from the N-terminus, the 314-residue chain is Secreted frizzled-related protein 1 (314 aa).

The N-terminal stretch at 1–31 (MGVGRSEGGRRGAALGVLLALGVALLAVGSA) is a signal peptide. Residues 53–169 (TKPHQCVAIP…FPQDYVCIAM (117 aa)) form the FZ domain. 5 disulfides stabilise this stretch: Cys58-Cys121, Cys68-Cys114, Cys105-Cys140, Cys129-Cys166, and Cys133-Cys157. Residue Asn173 is glycosylated (N-linked (GlcNAc...) asparagine). 3 disulfides stabilise this stretch: Cys186–Cys256, Cys189–Cys258, and Cys203–Cys306. The region spanning 186 to 306 (CPPCDNEMKS…FMKKVKAPDC (121 aa)) is the NTR domain.

Belongs to the secreted frizzled-related protein (sFRP) family.

The protein localises to the secreted. Its function is as follows. Soluble frizzled-related proteins (sFRPS) function as modulators of Wnt signaling through direct interaction with Wnts. They have a role in regulating cell growth and differentiation in specific cell types. This Gallus gallus (Chicken) protein is Secreted frizzled-related protein 1 (SFRP1).